The chain runs to 420 residues: Type II methyltransferase M.HgiCI (420 aa).

Residues 2–417 (LKFIDLFAGI…LDLFKSADLA (416 aa)) enclose the SAM-dependent MTase C5-type domain. Cysteine 75 is an active-site residue.

Belongs to the class I-like SAM-binding methyltransferase superfamily. C5-methyltransferase family.

The catalysed reaction is a 2'-deoxycytidine in DNA + S-adenosyl-L-methionine = a 5-methyl-2'-deoxycytidine in DNA + S-adenosyl-L-homocysteine + H(+). Its function is as follows. A methylase that recognizes the double-stranded sequence 5'-GGYRCC-3', methylates C-5 on both strands, and protects the DNA from cleavage by the HgiCI endonuclease. The sequence is that of Type II methyltransferase M.HgiCI (hgiCIM) from Herpetosiphon aurantiacus (Herpetosiphon giganteus).